Reading from the N-terminus, the 274-residue chain is 4-deoxy-L-threo-5-hexosulose-uronate ketol-isomerase (274 aa).

Zn(2+) is bound by residues histidine 192, histidine 194, glutamate 199, and histidine 241.

It belongs to the KduI family. The cofactor is Zn(2+).

It catalyses the reaction 5-dehydro-4-deoxy-D-glucuronate = 3-deoxy-D-glycero-2,5-hexodiulosonate. It functions in the pathway glycan metabolism; pectin degradation; 2-dehydro-3-deoxy-D-gluconate from pectin: step 4/5. Functionally, catalyzes the isomerization of 5-dehydro-4-deoxy-D-glucuronate to 3-deoxy-D-glycero-2,5-hexodiulosonate. The sequence is that of 4-deoxy-L-threo-5-hexosulose-uronate ketol-isomerase from Agrobacterium fabrum (strain C58 / ATCC 33970) (Agrobacterium tumefaciens (strain C58)).